A 744-amino-acid chain; its full sequence is Spalt-like protein sem-4 (744 aa).

The segment at 6–32 is disordered; sequence AEMAAVSSRRKQSKPRRMSGEGDAMMS. Residues 13–22 show a composition bias toward basic residues; sequence SRRKQSKPRR. 4 C2H2-type zinc fingers span residues 99–124, 305–327, 333–355, and 411–433; these read SSCPIQSCSQSFSSPAALTWHVLDAH, NQCILCRRVLSCKSALQMHYRTH, FKCKICQRAFTTKGNLKTHMGVH, and QQCPICQQRFLNAGELAVHITEH. Over residues 487–497 the composition is skewed to polar residues; sequence KNDSSPNTDTS. Disordered regions lie at residues 487–530 and 542–562; these read KNDS…RQDI and KLEEPPILEQQVSTTPNPKNE. The span at 499 to 509 shows a compositional bias: basic and acidic residues; sequence VEEKITRDDPP. Low complexity predominate over residues 513 to 525; the sequence is SLSPSNSSDSSSS. The segment covering 551–561 has biased composition (polar residues); sequence QQVSTTPNPKN. 3 consecutive C2H2-type zinc fingers follow at residues 589–611, 617–639, and 701–723; these read HQCGVCFKHFSSSSALQIHMRTH, FKCDMCGRAFTTRGNLKVHMGTH, and TVCSVCQKVCQSPNELEQHLKEH. The disordered stretch occupies residues 725–744; that stretch reads NNGSSAAPTPLASAATPPPS. Over residues 728–744 the composition is skewed to low complexity; that stretch reads SSAAPTPLASAATPPPS.

Belongs to the sal C2H2-type zinc-finger protein family.

Its subcellular location is the nucleus. Functionally, transcription factor, involved in positive and negative modulation of transcription. Binds to multiple DNA sequence motifs in the regulatory elements of target genes, including homeobox selector egl-5 and LIM homeobox mec-3. Involved in cell-fate regulation in multiple lineages, including neuronal, mesodermal and vulval. Required to regulate the fate of PLM touch receptor neurons, acting via negative modulation of transcription of egl-5 and mec-3. May modulate gene expression by interacting with different transcription factors during neuronal and mesodermal cell development. Promotes the proliferative sex myoblast (SM) fate, in a cell autonomous manner, acting via the SoxC transcription factor sem-2. Involved in vulval cell-fate determination, acting by regulating expression of homeobox protein lin-39, and may link lin-39 to incoming signaling pathways. Plays a role in detoxification of reactive oxygen species (ROS), by regulating expression of transcription factor skn-1 and the phase II detoxification genes. This chain is Spalt-like protein sem-4, found in Caenorhabditis elegans.